The sequence spans 342 residues: P2Y purinoceptor 12 (342 aa).

At 1 to 27 the chain is on the extracellular side; that stretch reads MQAVDNLTSAPGNTSLCTRDYKITQVL. N-linked (GlcNAc...) asparagine glycans are attached at residues asparagine 6 and asparagine 13. Intrachain disulfides connect cysteine 17/cysteine 270 and cysteine 97/cysteine 175. The chain crosses the membrane as a helical span at residues 28–50; the sequence is FPLLYTVLFFVGLITNGLAMRIF. Residues 51–61 lie on the Cytoplasmic side of the membrane; it reads FQIRSKSNFII. A phosphoserine mark is found at serine 55 and serine 57. Residues 62–82 form a helical membrane-spanning segment; that stretch reads FLKNTVISDLLMILTFPFKIL. Topologically, residues 83–97 are extracellular; it reads SDAKLGTGPLRTFVC. ADP is bound by residues arginine 93, cysteine 97, and tyrosine 105. A helical membrane pass occupies residues 98–118; it reads QVTSVIFYFTMYISISFLGLI. At 119-142 the chain is on the cytoplasmic side; it reads TIDRYQKTTRPFKTSNPKNLLGAK. A helical membrane pass occupies residues 143–162; the sequence is ILSVVIWAFMFLLSLPNMIL. ADP contacts are provided by residues 156 to 159, 175 to 179, histidine 187, and asparagine 191; these read SLPN and CSFLK. The Extracellular segment spans residues 163 to 185; that stretch reads TNRQPRDKNVKKCSFLKSEFGLV. The helical transmembrane segment at 186 to 207 threads the bilayer; sequence WHEIVNYICQVIFWINFLIVIV. Residues 208–233 are Cytoplasmic-facing; it reads CYTLITKELYRSYVRTRGVGKVPRKK. Residues 234 to 259 traverse the membrane as a helical segment; the sequence is VNVKVFIIIAVFFICFVPFHFARIPY. Residues 256 to 259, glutamine 263, and lysine 280 each bind ADP; that span reads RIPY. Over 260–278 the chain is Extracellular; that stretch reads TLSQTRDVFDCTAENTLFY. Residues 279–298 traverse the membrane as a helical segment; sequence VKESTLWLTSLNACLDPFIY. The Cytoplasmic segment spans residues 299–342; that stretch reads FFLCKSFRNSLISMLKCPNSATSLSQDNRKKEQDGGDPNEETPM. Positions 319–342 are disordered; it reads ATSLSQDNRKKEQDGGDPNEETPM. Residues 333-342 are compositionally biased toward acidic residues; sequence GGDPNEETPM.

The protein belongs to the G-protein coupled receptor 1 family. As to expression, highly expressed in the platelets, lower levels in the brain. Lowest levels in the lung, appendix, pituitary and adrenal gland. Expressed in the spinal cord and in the fetal brain.

Its subcellular location is the cell membrane. Receptor for ADP and ATP coupled to G-proteins that inhibit the adenylyl cyclase second messenger system. Not activated by UDP and UTP. Required for normal platelet aggregation and blood coagulation. The sequence is that of P2Y purinoceptor 12 (P2RY12) from Homo sapiens (Human).